Consider the following 311-residue polypeptide: Putative F-box protein At1g31090 (311 aa).

In terms of domain architecture, F-box spans 4 to 53 (GANSDSIPTDLIYEILSRLSVKPITRFRCVSKLWESIICRQDFTELFHNR). The interval 287-311 (RPAEQNTSTSSREDHLVRTVKRKRA) is disordered.

The chain is Putative F-box protein At1g31090 from Arabidopsis thaliana (Mouse-ear cress).